The primary structure comprises 60 residues: Temporin-MT5 (60 aa).

A signal peptide spans 1–22; it reads MFTLKKPLLLLFFLATINLSLC. The propeptide at 23 to 44 is removed in mature form; sequence EQERNAEEERRDEPDERNAEVE. The residue at position 58 (F58) is a Phenylalanine amide.

It belongs to the frog skin active peptide (FSAP) family. Temporin subfamily. Expressed by the skin glands.

It localises to the secreted. Functionally, antimicrobial peptide. This Amolops mantzorum (Sichuan torrent frog) protein is Temporin-MT5.